Reading from the N-terminus, the 214-residue chain is Adenylate kinase (214 aa).

10–15 is an ATP binding site; it reads GAGKGT. The NMP stretch occupies residues 30 to 59; it reads STGDMLRAAIKAGSELGQKAKILMDMGQLV. AMP is bound by residues Thr31, Arg36, 57–59, 85–88, and Gln92; these read QLV and GFPR. The tract at residues 122 to 159 is LID; sequence GRRVHPASGRTYHIVYNPPKVEDKDDITGEDLILRADD. Residues Arg123 and 132-133 contribute to the ATP site; that span reads TY. AMP-binding residues include Arg156 and Arg167. Gln200 lines the ATP pocket.

It belongs to the adenylate kinase family. As to quaternary structure, monomer.

It is found in the cytoplasm. It catalyses the reaction AMP + ATP = 2 ADP. Its pathway is purine metabolism; AMP biosynthesis via salvage pathway; AMP from ADP: step 1/1. In terms of biological role, catalyzes the reversible transfer of the terminal phosphate group between ATP and AMP. Plays an important role in cellular energy homeostasis and in adenine nucleotide metabolism. The polypeptide is Adenylate kinase (Histophilus somni (strain 129Pt) (Haemophilus somnus)).